The sequence spans 144 residues: Interferon-induced transmembrane protein 2 (144 aa).

Methionine 1 carries the N-acetylmethionine modification. The Cytoplasmic segment spans residues 1 to 56 (MSHNSQAFLSTNAGLPPSYETIKEEYGVTELGEPSNSAVVRTTVINMPREVSVPDH). Tyrosine 19 carries the post-translational modification Phosphotyrosine. The segment at residues 57-77 (VVWSLFNTLFFNACCLGFVAY) is an intramembrane region (helical). 3 S-palmitoyl cysteine lipidation sites follow: cysteine 70, cysteine 71, and cysteine 104. Over 78–110 (AYSVKSRDRKMVGDVVGAQAYASTAKCLNISSL) the chain is Cytoplasmic. Residues 111–131 (IFSILMVIICIIIFSTTSVVV) traverse the membrane as a helical segment. At 132-144 (FQSFAQRTPHSGF) the chain is on the extracellular side.

Belongs to the CD225/Dispanin family. As to quaternary structure, interacts with CD81. In terms of processing, palmitoylation on membrane-proximal cysteines controls clustering in membrane compartments and antiviral activity. Post-translationally, phosphorylation at Tyr-19 is required for endosomal and lysosomal location. As to expression, predominantly expressed in nascent primordial germ cells, as well as in gonadal germ cells.

Its subcellular location is the cell membrane. The protein localises to the lysosome membrane. The protein resides in the late endosome membrane. In terms of biological role, IFN-induced antiviral protein which inhibits the entry of viruses to the host cell cytoplasm, permitting endocytosis, but preventing subsequent viral fusion and release of viral contents into the cytosol. Active against multiple viruses, including influenza A virus, SARS coronavirus (SARS-CoV), Marburg virus (MARV) and Ebola virus (EBOV), Dengue virus (DNV) and West Nile virus (WNV). Can inhibit: influenza virus hemagglutinin protein-mediated viral entry, MARV and EBOV GP1,2-mediated viral entry and SARS-CoV S protein-mediated viral entry. Induces cell cycle arrest and mediates apoptosis by caspase activation and in p53-independent manner. The sequence is that of Interferon-induced transmembrane protein 2 (Ifitm2) from Mus musculus (Mouse).